The following is a 436-amino-acid chain: Adenosylhomocysteinase (436 aa).

Positions 62, 136, and 161 each coordinate substrate. Residue 162–164 (TTT) coordinates NAD(+). Residues Lys-191 and Asp-195 each coordinate substrate. Residues Asn-196, 225–230 (GFGDVG), Glu-248, Asn-283, 304–306 (IGH), and Asn-352 each bind NAD(+).

The protein belongs to the adenosylhomocysteinase family. NAD(+) serves as cofactor.

Its subcellular location is the cytoplasm. The catalysed reaction is S-adenosyl-L-homocysteine + H2O = L-homocysteine + adenosine. The protein operates within amino-acid biosynthesis; L-homocysteine biosynthesis; L-homocysteine from S-adenosyl-L-homocysteine: step 1/1. Functionally, may play a key role in the regulation of the intracellular concentration of adenosylhomocysteine. In Leptospira interrogans serogroup Icterohaemorrhagiae serovar copenhageni (strain Fiocruz L1-130), this protein is Adenosylhomocysteinase.